A 147-amino-acid chain; its full sequence is Transthyretin (147 aa).

The signal sequence occupies residues 1–20; sequence MASHRLLLLCLAGLVFVSEA. Cysteine 30 carries the post-translational modification Sulfocysteine. Residue lysine 35 coordinates L-thyroxine. Serine 72 carries the post-translational modification Phosphoserine. L-thyroxine is bound at residue glutamate 74. The N-linked (GlcNAc...) asparagine glycan is linked to asparagine 118. Serine 137 lines the L-thyroxine pocket.

It belongs to the transthyretin family. In terms of assembly, homotetramer. Dimer of dimers. In the homotetramer, subunits assemble around a central channel that can accommodate two ligand molecules. Interacts with RBP4. Post-translationally, sulfonation of the reactive cysteine Cys-30 enhances the stability of the native conformation of TTR, avoiding misassembly of the protein leading to amyloid formation.

It localises to the secreted. In terms of biological role, thyroid hormone-binding protein. Probably transports thyroxine from the bloodstream to the brain. The chain is Transthyretin (TTR) from Macaca fascicularis (Crab-eating macaque).